We begin with the raw amino-acid sequence, 647 residues long: Chaperone protein DnaK (647 aa).

A Phosphothreonine; by autocatalysis modification is found at Thr198. The tract at residues 603–647 (EQAQGAGGAQGFDPNAFQGGDAGQQQKADDGVVDAEFTEVKDDKK) is disordered. A compositionally biased stretch (low complexity) spans 618–628 (AFQGGDAGQQQ).

The protein belongs to the heat shock protein 70 family.

Acts as a chaperone. This Acinetobacter baylyi (strain ATCC 33305 / BD413 / ADP1) protein is Chaperone protein DnaK.